A 257-amino-acid chain; its full sequence is Diaminopimelate epimerase (257 aa).

Asn-6 and Asn-57 together coordinate substrate. The active-site Proton donor is Cys-66. Residues Gly-67–Asn-68, Asn-170, and Glu-188–Arg-189 each bind substrate. The active-site Proton acceptor is Cys-198. A substrate-binding site is contributed by Gly-199 to Thr-200.

The protein belongs to the diaminopimelate epimerase family. In terms of assembly, homodimer.

Its subcellular location is the cytoplasm. It carries out the reaction (2S,6S)-2,6-diaminopimelate = meso-2,6-diaminopimelate. It participates in amino-acid biosynthesis; L-lysine biosynthesis via DAP pathway; DL-2,6-diaminopimelate from LL-2,6-diaminopimelate: step 1/1. Its function is as follows. Catalyzes the stereoinversion of LL-2,6-diaminopimelate (L,L-DAP) to meso-diaminopimelate (meso-DAP), a precursor of L-lysine and an essential component of the bacterial peptidoglycan. This chain is Diaminopimelate epimerase, found in Chlorobaculum tepidum (strain ATCC 49652 / DSM 12025 / NBRC 103806 / TLS) (Chlorobium tepidum).